A 1502-amino-acid chain; its full sequence is Gem-associated protein 5 (1502 aa).

The tract at residues Met-1–Leu-124 is important for interaction with U1 snRNA. An interaction with U4 snRNA region spans residues Asn-13 to Tyr-15. Phosphoserine is present on Ser-48. 11 WD repeats span residues Gly-62–Glu-104, Leu-107–Phe-148, Glu-150–His-189, Gly-193–Val-264, Thr-280–Tyr-321, His-333–Thr-374, Ser-377–Asp-417, Gly-424–Ile-464, Tyr-468–Gln-509, Arg-533–Thr-573, and Gln-576–Pro-622. Position 624 is a phosphoserine (Ser-624). 2 WD repeats span residues Gly-637–Asn-677 and Gly-680–Pro-720. Disordered stretches follow at residues Lys-740–Val-797 and Ser-819–Leu-838. Residue Lys-754 forms a Glycyl lysine isopeptide (Lys-Gly) (interchain with G-Cter in SUMO2) linkage. Phosphoserine occurs at positions 757, 770, and 778. The segment covering Leu-825–Leu-838 has biased composition (basic and acidic residues). Residue Ser-845 is modified to Phosphoserine. 2 disordered regions span residues Val-1309–Glu-1338 and His-1378–Glu-1427. Positions Ala-1355–Gln-1382 form a coiled coil. Residues Lys-1380 to Pro-1391 are compositionally biased toward polar residues. Residues Ser-1392–Arg-1407 show a composition bias toward basic and acidic residues.

This sequence belongs to the WD repeat gemin-5 family. In terms of assembly, part of the core SMN complex that contains SMN1, GEMIN2/SIP1, DDX20/GEMIN3, GEMIN4, GEMIN5, GEMIN6, GEMIN7, GEMIN8 and STRAP/UNRIP. Part of the SMN-Sm complex that contains SMN1, GEMIN2/SIP1, DDX20/GEMIN3, GEMIN4, GEMIN5, GEMIN6, GEMIN7, GEMIN8, STRAP/UNRIP and the Sm proteins SNRPB, SNRPD1, SNRPD2, SNRPD3, SNRPE, SNRPF and SNRPG. Interacts directly with SMN1, SNRPB, SNRPD1, SNRPD2, SNRPD3 and SNRPE. Identified in a SMN complex that contains GEMIN2/SIP1. Interacts with cytosolic DDX20/GEMIN3 and GEMIN4. Interacts with SNRNP70 and HNRNPU. Identified in a complex with 80S ribosomes; binds to the 60S large ribosomal subunit. Interacts with the ribosomal subunits RPL3 and RPL4.

It is found in the nucleus. It localises to the nucleoplasm. The protein resides in the gem. Its subcellular location is the cytoplasm. Its function is as follows. The SMN complex catalyzes the assembly of small nuclear ribonucleoproteins (snRNPs), the building blocks of the spliceosome, and thereby plays an important role in the splicing of cellular pre-mRNAs. Most spliceosomal snRNPs contain a common set of Sm proteins SNRPB, SNRPD1, SNRPD2, SNRPD3, SNRPE, SNRPF and SNRPG that assemble in a heptameric protein ring on the Sm site of the small nuclear RNA to form the core snRNP (Sm core). In the cytosol, the Sm proteins SNRPD1, SNRPD2, SNRPE, SNRPF and SNRPG are trapped in an inactive 6S pICln-Sm complex by the chaperone CLNS1A that controls the assembly of the core snRNP. To assemble core snRNPs, the SMN complex accepts the trapped 5Sm proteins from CLNS1A forming an intermediate. Binding of snRNA inside 5Sm ultimately triggers eviction of the SMN complex, thereby allowing binding of SNRPD3 and SNRPB to complete assembly of the core snRNP. Within the SMN complex, GEMIN5 recognizes and delivers the small nuclear RNAs (snRNAs) to the SMN complex. Binds to the 7-methylguanosine cap of RNA molecules. Binds to the 3'-UTR of SMN1 mRNA and regulates its translation; does not affect mRNA stability. May play a role in the regulation of protein synthesis via its interaction with ribosomes. In Mus musculus (Mouse), this protein is Gem-associated protein 5 (Gemin5).